The following is a 556-amino-acid chain: Set1/Ash2 histone methyltransferase complex subunit ASH2 (556 aa).

The segment covering 1-19 has biased composition (polar residues); the sequence is MEDSQMDTSSPTESSSEVN. Residues 1-27 are disordered; the sequence is MEDSQMDTSSPTESSSEVNFTAEEDKS. A PHD-type zinc finger spans residues 34-90; the sequence is AGVCYCGKERNLNIVELLCATCSRWVHETCVSYQLGKGKLLPFITNYVFVCKNCSAS. Cys-37, Cys-39, Cys-52, Cys-55, His-60, Cys-63, Cys-84, and Cys-87 together coordinate Zn(2+). A disordered region spans residues 216–251; it reads ASLSKNNRQKRKFPGTDSGPTGKKGRPSSDITANVK. Residues 288–510 form the B30.2/SPRY domain; that stretch reads SSDWAGKPIP…VSVNFGPAFK (223 aa).

Core component of several methyltransferase-containing complexes. Component of the SET1C/COMPASS complex, composed at least of the catalytic subunit Set1, wds/WDR5, Wdr82, Rbbp5, ash2, Cfp1/CXXC1, hcf and Dpy-30L1. Component of the MLL3/4 (Histone-lysine N-methyltransferase/demethylase TRR) complex composed at least of the catalytic subunit trr, ash2, Rbbp5, Dpy-30L1, wds, hcf, ptip, Pa1, Utx, Lpt and Ncoa6. Interacts with hcf. Interacts with trr. As to quaternary structure, interacts (via B30.2/SPRY domain) with sktl; the interaction is direct. In larvae and pupae, expressed in imaginal disks, salivary gland and fat body cells. No expression detected in central nervous system (at protein level).

The protein resides in the nucleus. It localises to the chromosome. In terms of biological role, transcriptional regulator. Regulates a number of genes involved in wing development including activation of net and bs and repression of rho and kni and controls vein-intervein patterning during wing development. Required for correct expression of a number of homeotic genes including Scr in the first leg imaginal disk and Ubx in the third leg imaginal disk and haltere disks. Required for stabilization of the histone-lysine N-methyltransferase trr and for trimethylation of 'Lys-4' of histone H3. Together with sktl probably plays a role in maintenance of transcriptionally active chromatin through down-regulation of histone H1 hyperphosphorylation. This Drosophila melanogaster (Fruit fly) protein is Set1/Ash2 histone methyltransferase complex subunit ASH2.